Here is a 188-residue protein sequence, read N- to C-terminus: MDNLQTYKLRLLDKYVLNKCMSLNRSNTSTIALDHVNIKMNYRKKKKEVYQMIELITLFEQITGEKPLIKLNESTEKNNVVKLEDFKLAVRLHKQKAKYFLNALCYVGLGERKYLTLKEENNIDLAQLKLSYRYKNLKIFRPILIRKDMNLEARLAIDIQYKTIGINNGQLTKYKFYLWKKNEFRITE.

The L5-specific motif signature appears at I62–K77.

The protein localises to the mitochondrion. This is an uncharacterized protein from Dictyostelium discoideum (Social amoeba).